Here is a 333-residue protein sequence, read N- to C-terminus: Gamma-D-glutamyl-L-lysine dipeptidyl-peptidase (333 aa).

The first 23 residues, 1 to 23 (MKKVGTAFLTTLFIFSSFTSAHA), serve as a signal peptide directing secretion. Substrate is bound by residues Glu-83, Tyr-118, 237 to 239 (DCS), and 256 to 257 (DS). The 125-residue stretch at 208–332 (TPAADDLINT…EEYAGARRYL (125 aa)) folds into the NlpC/P60 domain. The active-site Nucleophile is the Cys-238. The Proton acceptor role is filled by His-291. His-303 is an active-site residue.

This sequence belongs to the peptidase C40 family. In terms of assembly, monomer in solution.

It catalyses the reaction The enzyme releases L-Ala-gamma-D-Glu dipeptides from cell wall peptides via cleavage of an L-Ala-gamma-D-Glu-|-L-Lys bond.. Its pathway is cell wall degradation; peptidoglycan degradation. Its function is as follows. Specifically hydrolyzes gamma-D-glutamyl-L-lysine bonds in murein peptides, releasing L-Ala-D-Glu. The polypeptide is Gamma-D-glutamyl-L-lysine dipeptidyl-peptidase (Bacillus cereus (strain ATCC 10987 / NRS 248)).